The primary structure comprises 402 residues: tRNA(Met) cytidine acetate ligase (402 aa).

Residues 7-20, Gly102, Asn171, and Arg196 contribute to the ATP site; that span reads IAEYNPMHNGHIHH.

The protein belongs to the TmcAL family.

It is found in the cytoplasm. The enzyme catalyses cytidine(34) in elongator tRNA(Met) + acetate + ATP = N(4)-acetylcytidine(34) in elongator tRNA(Met) + AMP + diphosphate. Its function is as follows. Catalyzes the formation of N(4)-acetylcytidine (ac(4)C) at the wobble position of elongator tRNA(Met), using acetate and ATP as substrates. First activates an acetate ion to form acetyladenylate (Ac-AMP) and then transfers the acetyl group to tRNA to form ac(4)C34. The sequence is that of tRNA(Met) cytidine acetate ligase from Clostridium acetobutylicum (strain ATCC 824 / DSM 792 / JCM 1419 / IAM 19013 / LMG 5710 / NBRC 13948 / NRRL B-527 / VKM B-1787 / 2291 / W).